Reading from the N-terminus, the 876-residue chain is Probable inactive ATP-dependent zinc metalloprotease FTSHI 2, chloroplastic (876 aa).

The interval M1–N20 is disordered. The N-terminal 32 residues, M1–S32, are a transit peptide targeting the chloroplast. The segment covering H8–E19 has biased composition (polar residues). A helical transmembrane segment spans residues L59–A79. The interval T256–K276 is disordered. The span at K258–K275 shows a compositional bias: basic residues. A helical transmembrane segment spans residues V304 to Y324. Residues E350 to G370 form a disordered region. The span at G357–G368 shows a compositional bias: acidic residues. An ATP-binding site is contributed by G450–T457.

This sequence in the N-terminal section; belongs to the AAA ATPase family. In the C-terminal section; belongs to the peptidase M41 family. Homooligomer. Interacts with FtsHi4.

It is found in the plastid. It localises to the chloroplast membrane. Required for plastid development during embryogenesis. Might be involved in chaperone functions or play a structural role in the thylakoid FtsH complex. This is Probable inactive ATP-dependent zinc metalloprotease FTSHI 2, chloroplastic from Arabidopsis thaliana (Mouse-ear cress).